The sequence spans 130 residues: S-adenosylmethionine decarboxylase proenzyme (130 aa).

Serine 63 acts as the Schiff-base intermediate with substrate; via pyruvic acid in catalysis. Serine 63 is modified (pyruvic acid (Ser); by autocatalysis). The Proton acceptor; for processing activity role is filled by histidine 68. Cysteine 83 functions as the Proton donor; for catalytic activity in the catalytic mechanism.

The protein belongs to the prokaryotic AdoMetDC family. Type 1 subfamily. As to quaternary structure, heterotetramer of two alpha and two beta chains arranged as a dimer of alpha/beta heterodimers. It depends on pyruvate as a cofactor. In terms of processing, is synthesized initially as an inactive proenzyme. Formation of the active enzyme involves a self-maturation process in which the active site pyruvoyl group is generated from an internal serine residue via an autocatalytic post-translational modification. Two non-identical subunits are generated from the proenzyme in this reaction, and the pyruvate is formed at the N-terminus of the alpha chain, which is derived from the carboxyl end of the proenzyme. The post-translation cleavage follows an unusual pathway, termed non-hydrolytic serinolysis, in which the side chain hydroxyl group of the serine supplies its oxygen atom to form the C-terminus of the beta chain, while the remainder of the serine residue undergoes an oxidative deamination to produce ammonia and the pyruvoyl group blocking the N-terminus of the alpha chain.

The enzyme catalyses S-adenosyl-L-methionine + H(+) = S-adenosyl 3-(methylsulfanyl)propylamine + CO2. It functions in the pathway amine and polyamine biosynthesis; S-adenosylmethioninamine biosynthesis; S-adenosylmethioninamine from S-adenosyl-L-methionine: step 1/1. In terms of biological role, catalyzes the decarboxylation of S-adenosylmethionine to S-adenosylmethioninamine (dcAdoMet), the propylamine donor required for the synthesis of the polyamines spermine and spermidine from the diamine putrescine. This Thermosipho melanesiensis (strain DSM 12029 / CIP 104789 / BI429) protein is S-adenosylmethionine decarboxylase proenzyme.